A 93-amino-acid polypeptide reads, in one-letter code: Small ribosomal subunit protein uS19 (93 aa).

Belongs to the universal ribosomal protein uS19 family.

Its function is as follows. Protein S19 forms a complex with S13 that binds strongly to the 16S ribosomal RNA. This is Small ribosomal subunit protein uS19 from Synechococcus sp. (strain JA-2-3B'a(2-13)) (Cyanobacteria bacterium Yellowstone B-Prime).